A 1409-amino-acid chain; its full sequence is Adhesion and penetration protein autotransporter (1409 aa).

An N-terminal signal peptide occupies residues 1–25; the sequence is MKKTVFRLNFLTACVSLGIASQAWA. Residues 26 to 294 enclose the Peptidase S6 domain; sequence GHTYFGIDYQ…LIREEWFYNE (269 aa). S250 is an active-site residue. Disordered stretches follow at residues 866–888 and 1016–1078; these read YSASSNNAPRHRRSLETETTPTS and AKQV…SKRA. Polar residues predominate over residues 1057-1067; that stretch reads VEQTTETQTSK. A compositionally biased stretch (basic residues) spans 1068 to 1077; that stretch reads PKTKKGRSKR. The region spanning 1156-1409 is the Autotransporter domain; the sequence is VDQAQSALWT…NVGVKLGYRW (254 aa).

It is found in the periplasm. The protein resides in the secreted. It localises to the cell surface. The protein localises to the cell outer membrane. Its function is as follows. Probable protease; promotes adherence and invasion by directly binding to a host cell structure. The polypeptide is Adhesion and penetration protein autotransporter (hap) (Haemophilus influenzae (strain ATCC 51907 / DSM 11121 / KW20 / Rd)).